A 164-amino-acid chain; its full sequence is HTH-type transcriptional regulator IscR (164 aa).

The 130-residue stretch at 2–131 (RLTSKGRYAV…NNITLAELVN (130 aa)) folds into the HTH rrf2-type domain. The segment at residues 28–51 (LADISERQGISLSYLEQLFSRLRK) is a DNA-binding region (H-T-H motif). 3 residues coordinate [2Fe-2S] cluster: C92, C98, and C104. A disordered region spans residues 143 to 164 (NNDTRRTANGRPQETINVNLRA). Over residues 152 to 164 (GRPQETINVNLRA) the composition is skewed to polar residues.

[2Fe-2S] cluster serves as cofactor.

Regulates the transcription of several operons and genes involved in the biogenesis of Fe-S clusters and Fe-S-containing proteins. In Yersinia enterocolitica serotype O:8 / biotype 1B (strain NCTC 13174 / 8081), this protein is HTH-type transcriptional regulator IscR.